We begin with the raw amino-acid sequence, 222 residues long: MKPDIKICGLKTPEAIDRALKRGATHIGFIFFEKSPRYIEPDLAAKLAEPARGKAKIVAVVVDPTNDELDEIVSLLKPDILQLHGNESPEHVLTIKALYGLPVMKVFSVRTADDLKRVEAYIGIADRFLFDAKAPKGSELPGGNGISFDWSLLSWLDGSIDYMLSGGLNKNNVADALVKTRARGIDVSSGVETEPGVKSVAMIDEFFDAVETADAPVMAPGS.

Belongs to the TrpF family.

The enzyme catalyses N-(5-phospho-beta-D-ribosyl)anthranilate = 1-(2-carboxyphenylamino)-1-deoxy-D-ribulose 5-phosphate. It functions in the pathway amino-acid biosynthesis; L-tryptophan biosynthesis; L-tryptophan from chorismate: step 3/5. The sequence is that of N-(5'-phosphoribosyl)anthranilate isomerase from Rhizobium etli (strain ATCC 51251 / DSM 11541 / JCM 21823 / NBRC 15573 / CFN 42).